The primary structure comprises 579 residues: Putative ABC transporter ATP-binding protein VPA1482 (579 aa).

ABC transporter domains are found at residues 3-244 and 299-533; these read IEFS…GIRE and LEVR…ANLT. ATP contacts are provided by residues 37–44 and 332–339; these read GPSGSGKS and GKNGSGKS.

This sequence belongs to the ABC transporter superfamily.

Its subcellular location is the cell inner membrane. Functionally, probably part of an ABC transporter complex. Responsible for energy coupling to the transport system. This Vibrio parahaemolyticus serotype O3:K6 (strain RIMD 2210633) protein is Putative ABC transporter ATP-binding protein VPA1482.